A 99-amino-acid polypeptide reads, in one-letter code: Gibberellin-regulated protein 3 (99 aa).

The N-terminal stretch at 1–26 (MAIFRSTLVLLLILFCLTTFELHVHA) is a signal peptide.

It belongs to the GASA family. Six disulfide bonds may be present. Expressed in siliques, dry seeds and vasculature of roots and rosette leaves.

It is found in the secreted. In terms of biological role, gibberellin-regulated protein that may function in hormonal controlled steps of development such as seed germination, flowering and seed maturation. This chain is Gibberellin-regulated protein 3 (GASA3), found in Arabidopsis thaliana (Mouse-ear cress).